The following is a 169-amino-acid chain: Crossover junction endodeoxyribonuclease RuvC (169 aa).

Catalysis depends on residues Asp11, Glu71, and Asp143. Mg(2+)-binding residues include Asp11, Glu71, and Asp143.

This sequence belongs to the RuvC family. As to quaternary structure, homodimer which binds Holliday junction (HJ) DNA. The HJ becomes 2-fold symmetrical on binding to RuvC with unstacked arms; it has a different conformation from HJ DNA in complex with RuvA. In the full resolvosome a probable DNA-RuvA(4)-RuvB(12)-RuvC(2) complex forms which resolves the HJ. Requires Mg(2+) as cofactor.

The protein resides in the cytoplasm. The enzyme catalyses Endonucleolytic cleavage at a junction such as a reciprocal single-stranded crossover between two homologous DNA duplexes (Holliday junction).. In terms of biological role, the RuvA-RuvB-RuvC complex processes Holliday junction (HJ) DNA during genetic recombination and DNA repair. Endonuclease that resolves HJ intermediates. Cleaves cruciform DNA by making single-stranded nicks across the HJ at symmetrical positions within the homologous arms, yielding a 5'-phosphate and a 3'-hydroxyl group; requires a central core of homology in the junction. The consensus cleavage sequence is 5'-(A/T)TT(C/G)-3'. Cleavage occurs on the 3'-side of the TT dinucleotide at the point of strand exchange. HJ branch migration catalyzed by RuvA-RuvB allows RuvC to scan DNA until it finds its consensus sequence, where it cleaves and resolves the cruciform DNA. This is Crossover junction endodeoxyribonuclease RuvC from Bartonella quintana (strain Toulouse) (Rochalimaea quintana).